Consider the following 117-residue polypeptide: uncharacterized protein (117 aa).

The first 18 residues, 1–18, serve as a signal peptide directing secretion; it reads MKFFWVSSLLGLLGLSTA. Asn-86 carries an N-linked (GlcNAc...) asparagine glycan.

This is an uncharacterized protein from Schizosaccharomyces pombe (strain 972 / ATCC 24843) (Fission yeast).